The primary structure comprises 775 residues: Protein STRUBBELIG-RECEPTOR FAMILY 1 (775 aa).

The signal sequence occupies residues 1-31 (MRSMRSGRDNNICFLGFLSFALISLPSLSLA). At 32-314 (LTNPDDVAAI…GKEDSFTSKR (283 aa)) the chain is on the extracellular side. 6 LRR repeats span residues 101–122 (SLKA…TLPV), 123–146 (SLQN…SSLK), 147–169 (SLSV…FQDL), 171–193 (LMIN…MQNL), 195–217 (TLTS…QDLP), and 218–238 (LKDL…KLLS). N-linked (GlcNAc...) asparagine glycosylation occurs at N133. Residues N181 and N192 are each glycosylated (N-linked (GlcNAc...) asparagine). N-linked (GlcNAc...) asparagine glycosylation occurs at N250. The tract at residues 254–308 (APSPSPETPPSPTSPKRPFFGPPSPNASAGHGQAHVRSPPSDHHPSRPTPQGKED) is disordered. Residues 256–278 (SPSPETPPSPTSPKRPFFGPPSP) are compositionally biased toward pro residues. An N-linked (GlcNAc...) asparagine glycan is attached at N279. Residues 315–335 (IIWISILGAFSFVVLALVCLL) traverse the membrane as a helical segment. Over 336-775 (CGRKCLRKRE…NGDNQYTGRR (440 aa)) the chain is Cytoplasmic. The segment at 345–414 (EDSEQLSKPH…VGSESKQESH (70 aa)) is disordered. A compositionally biased stretch (polar residues) spans 367 to 379 (RSNASMLPPSNTF). Positions 380 to 391 (NKDKEARPKERV) are enriched in basic and acidic residues. One can recognise a Protein kinase domain in the interval 478-756 (FSHENLIGTG…EVVQDLSDMI (279 aa)).

This sequence belongs to the protein kinase superfamily. Ser/Thr protein kinase family. Expressed in roots, stems, leaves and flowers. Low expression in seedlings and siliques.

It localises to the membrane. Functionally, not essential for epidermal patterning and not redundant with STRUBBELIG. This Arabidopsis thaliana (Mouse-ear cress) protein is Protein STRUBBELIG-RECEPTOR FAMILY 1 (SRF1).